A 408-amino-acid chain; its full sequence is MSWDQVWIDVNLATMDPSVSAPYGAITNAAIAVKDGKIAWLGPRSELPAFDVLSIPVYRGKGGWITPGLIDAHTHLIFAGNRANEFELRLQGASYEDIARAGGGIISTVKACREADEAELFELGRQRLNALAKEGVTTVEIKSGYGLDTETELKILRVARELGKHHHVDVKTTFLGAHAIPPEYKDNSDSYVDLIINKMLPAVIAENLADAVDVFCENIAFNLEQTERVLSAAKAAGLEIKLHAEQLTNMGGSALAARLGAKSVDHIEYLDEAGVKALSESGTCAVLLPGAFYFLRETQKPPIDLLRQYGVPMVLASDFNPGSSPICSTLLMLNMGCTLFRLTPEEALTGLTLNAAKALGIEDTVGSLVVGKQADFCLWDIATPAQLAYSYGVNPCKDVVKNGKLVHQ.

The Fe(3+) site is built by H73 and H75. Residues H73 and H75 each contribute to the Zn(2+) site. Residues R82, Y145, and H178 each contribute to the 4-imidazolone-5-propanoate site. Y145 contributes to the N-formimidoyl-L-glutamate binding site. Residue H243 coordinates Fe(3+). H243 lines the Zn(2+) pocket. Residue Q246 participates in 4-imidazolone-5-propanoate binding. D318 serves as a coordination point for Fe(3+). D318 provides a ligand contact to Zn(2+). N320 and G322 together coordinate N-formimidoyl-L-glutamate. S323 is a 4-imidazolone-5-propanoate binding site.

This sequence belongs to the metallo-dependent hydrolases superfamily. HutI family. Zn(2+) is required as a cofactor. Fe(3+) serves as cofactor.

The protein localises to the cytoplasm. The catalysed reaction is 4-imidazolone-5-propanoate + H2O = N-formimidoyl-L-glutamate. It functions in the pathway amino-acid degradation; L-histidine degradation into L-glutamate; N-formimidoyl-L-glutamate from L-histidine: step 3/3. Functionally, catalyzes the hydrolytic cleavage of the carbon-nitrogen bond in imidazolone-5-propanoate to yield N-formimidoyl-L-glutamate. It is the third step in the universal histidine degradation pathway. This chain is Imidazolonepropionase, found in Shewanella putrefaciens (strain CN-32 / ATCC BAA-453).